Reading from the N-terminus, the 99-residue chain is MKRSLKNNPFVANPLLRKMEKLNRREDKILIRTWSRASTIILTMIGHTIAIHNGKEHLPIYITDYMVGHKLGEFAPTINFHEHAKNDNKSRRSKMRIDY.

The protein belongs to the universal ribosomal protein uS19 family.

The protein resides in the plastid. The protein localises to the chloroplast. In terms of biological role, protein S19 forms a complex with S13 that binds strongly to the 16S ribosomal RNA. This chain is Small ribosomal subunit protein uS19c, found in Oenothera biennis (German evening primrose).